The sequence spans 787 residues: ABC transporter G family member 5 (787 aa).

A compositionally biased stretch (basic and acidic residues) spans 1–17; that stretch reads MSRFVDKLPLFDRRPSP. 2 disordered regions span residues 1–25 and 71–116; these read MSRFVDKLPLFDRRPSPMEEAEGLP and NDAR…EGQP. Over residues 74–85 the composition is skewed to polar residues; sequence RSGSSTPISSPR. The ABC transporter domain maps to 121-382; it reads LKFTDLTYSV…FLDFGKPIPD (262 aa). 175–182 contacts ATP; that stretch reads GASGSGKS. The ABC transmembrane type-2 domain maps to 484-691; that stretch reads GVLTRRAFIN…PYEAVMQNEF (208 aa). 8 helical membrane passes run 500–520, 535–555, 576–596, 599–619, 620–640, 641–661, 728–745, and 760–780; these read VFIIRLAAVLVTGFILATIFW, FFAIAMSTMYYTCSDALPVFL, VLSHTIVGFPSLVVLSFAFAL, FFSVGLAGGVNGFFYFVAIVL, ASFWAGSGFATFLSGVVTHVM, LGFPVVLSTLAYFLLFSGFFI, SLGVNIGTGTCITTGPDF, and LWITVAWGFLFRILFYISLLL.

It belongs to the ABC transporter superfamily. ABCG family. Eye pigment precursor importer (TC 3.A.1.204) subfamily. In terms of tissue distribution, expressed in the crown root primordia, endodermis, pericycle and stele in the root, in leaf primordia of main and axillary shoots, and in the vascular cells and leaf epidermis of older leaves.

The protein resides in the cell membrane. Functionally, essential transporter for growth and development under abiotic stress. Mediates shoot branching by promoting the outgrowth of lateral shoots. Required for salt tolerance via Na/K homeostasis, at least partly by regulating SKC1/OsHKT1;5. Necessary for hypodermal suberization of roots, which contributes to formation of the apoplastic barrier. This chain is ABC transporter G family member 5, found in Oryza sativa subsp. japonica (Rice).